Here is a 51-residue protein sequence, read N- to C-terminus: Insulin-2 (51 aa).

Intrachain disulfides connect cysteine 8/cysteine 37, cysteine 20/cysteine 50, and cysteine 36/cysteine 41.

This sequence belongs to the insulin family. As to quaternary structure, heterodimer of a B chain and an A chain linked by two disulfide bonds.

The protein resides in the secreted. Functionally, insulin decreases blood glucose concentration. It increases cell permeability to monosaccharides, amino acids and fatty acids. It accelerates glycolysis, the pentose phosphate cycle, and glycogen synthesis in liver. This Katsuwonus pelamis (Skipjack tuna) protein is Insulin-2.